The sequence spans 399 residues: Ribonucleoside-diphosphate reductase small chain 1 (399 aa).

A phosphoserine mark is found at Ser-15, Ser-24, and Ser-41. 3 residues coordinate Fe cation: Asp-145, Glu-176, and His-179. Tyr-183 is a catalytic residue. Residues Glu-239, Glu-273, and His-276 each contribute to the Fe cation site.

Belongs to the ribonucleoside diphosphate reductase small chain family. As to quaternary structure, heterotetramer of two large (R1) and two small (R2) subunits. S.cerevisiae has two different R1 subunits (RNR1 and RNR3) and two different R2 subunits (RNR2 and RNR4). The functional form of the small subunits is a RNR2-RNR4 heterodimer, where RNR2 provides the iron-radical center and RNR4 is required for proper folding of RNR2 and assembly with the large subunits. Under normal growth conditions, the active form of the large subunits is a homodimer of the constitutively expressed RNR1. In damaged cells or cells arrested for DNA synthesis, the reductase consists of multiple species because of the association of the small subunits (RNR2-RNR4) with either the RNR1 homodimer or a heterodimer of RNR1 and the damage-inducible RNR3. Interacts with DIF1. It depends on Fe cation as a cofactor.

It localises to the nucleus. It catalyses the reaction a 2'-deoxyribonucleoside 5'-diphosphate + [thioredoxin]-disulfide + H2O = a ribonucleoside 5'-diphosphate + [thioredoxin]-dithiol. Provides the precursors necessary for DNA synthesis. Catalyzes the biosynthesis of deoxyribonucleotides from the corresponding ribonucleotides. RNR2 provides the diiron-tyrosyl radical center. The chain is Ribonucleoside-diphosphate reductase small chain 1 (RNR2) from Saccharomyces cerevisiae (strain ATCC 204508 / S288c) (Baker's yeast).